Consider the following 68-residue polypeptide: Inhibitor of trypsin and hageman factor (68 aa).

N-acetylserine is present on S1. C3 and C48 are disulfide-bonded.

This sequence belongs to the protease inhibitor I13 (potato type I serine protease inhibitor) family.

Functionally, specifically inhibits both trypsin and activated Hageman factor. The chain is Inhibitor of trypsin and hageman factor from Cucurbita maxima (Pumpkin).